We begin with the raw amino-acid sequence, 449 residues long: UDP-N-acetylmuramoylalanine--D-glutamate ligase (449 aa).

Residue 118-124 (GTNGKTT) participates in ATP binding.

Belongs to the MurCDEF family.

The protein localises to the cytoplasm. The enzyme catalyses UDP-N-acetyl-alpha-D-muramoyl-L-alanine + D-glutamate + ATP = UDP-N-acetyl-alpha-D-muramoyl-L-alanyl-D-glutamate + ADP + phosphate + H(+). It participates in cell wall biogenesis; peptidoglycan biosynthesis. Its function is as follows. Cell wall formation. Catalyzes the addition of glutamate to the nucleotide precursor UDP-N-acetylmuramoyl-L-alanine (UMA). The sequence is that of UDP-N-acetylmuramoylalanine--D-glutamate ligase from Staphylococcus epidermidis (strain ATCC 12228 / FDA PCI 1200).